A 338-amino-acid chain; its full sequence is Pseudouridylate synthase TRUB1 (338 aa).

A2 is subject to N-acetylalanine. The Nucleophile role is filled by D109.

Belongs to the pseudouridine synthase TruB family.

It localises to the nucleus. It is found in the cytoplasm. Its subcellular location is the cytosol. The catalysed reaction is a uridine in mRNA = a pseudouridine in mRNA. The enzyme catalyses a uridine in tRNA = a pseudouridine in tRNA. It carries out the reaction uridine(55) in tRNA = pseudouridine(55) in tRNA. Functionally, pseudouridine synthase that catalyzes pseudouridylation of mRNAs and tRNAs. Mediates pseudouridylation of mRNAs with the consensus sequence 5'-GUUCNANNC-3', harboring a stem-loop structure. Constitutes the major pseudouridine synthase acting on mRNAs. Also catalyzes pseudouridylation of some tRNAs, including synthesis of pseudouridine(55) from uracil-55, in the psi GC loop of a subset of tRNAs. Promotes the processing of pri-let-7 microRNAs (pri-miRNAs) independently of its RNA pseudouridylate synthase activity. Acts by binding to the stem-loop structure on pri-let-7, preventing LIN28-binding (LIN28A and/or LIN28B), thereby enhancing the interaction between pri-let-7 and the microprocessor DGCR8, which mediates miRNA maturation. This is Pseudouridylate synthase TRUB1 from Mus musculus (Mouse).